The sequence spans 371 residues: DNA replication and repair protein RecF (371 aa).

Position 30 to 37 (30 to 37) interacts with ATP; sequence GENAQGKT.

It belongs to the RecF family.

It localises to the cytoplasm. In terms of biological role, the RecF protein is involved in DNA metabolism; it is required for DNA replication and normal SOS inducibility. RecF binds preferentially to single-stranded, linear DNA. It also seems to bind ATP. This Staphylococcus haemolyticus (strain JCSC1435) protein is DNA replication and repair protein RecF.